The primary structure comprises 162 residues: UPF0260 protein Caul_3920 (162 aa).

Belongs to the UPF0260 family.

In Caulobacter sp. (strain K31), this protein is UPF0260 protein Caul_3920.